The following is a 120-amino-acid chain: Chaperonin GroEL (120 aa).

Aspartate 23–threonine 27 provides a ligand contact to ATP.

Belongs to the chaperonin (HSP60) family. As to quaternary structure, forms a cylinder of 14 subunits composed of two heptameric rings stacked back-to-back. Interacts with the co-chaperonin GroES.

It localises to the cytoplasm. The catalysed reaction is ATP + H2O + a folded polypeptide = ADP + phosphate + an unfolded polypeptide.. Functionally, together with its co-chaperonin GroES, plays an essential role in assisting protein folding. The GroEL-GroES system forms a nano-cage that allows encapsulation of the non-native substrate proteins and provides a physical environment optimized to promote and accelerate protein folding. The chain is Chaperonin GroEL from Mycobacterium scrofulaceum.